The chain runs to 1330 residues: Protein PUTATIVE RECOMBINATION INITIATION DEFECT 1 (1330 aa).

Residues 1310 to 1330 (REGRVSPIQEETRQMQTERIV) form a disordered region.

As to quaternary structure, interacts with SPO11-1. According to PubMed:28855712, may interact with SPO11-2; this is in contradiction with PubMed:9461215 which claims that it seems to not interact with SPO11-2. Binds to DFO, PRD3 and MTOPVIB. Facilitates an interaction between PRD3 and DFO. Expressed in flower buds.

It localises to the nucleus. In terms of biological role, involved in DNA cleavage that forms the double-strand breaks (DSB) that initiate meiotic recombination. This Arabidopsis thaliana (Mouse-ear cress) protein is Protein PUTATIVE RECOMBINATION INITIATION DEFECT 1.